A 552-amino-acid chain; its full sequence is Scaffold protein (552 aa).

It belongs to the poxviridae protein D13 family. As to quaternary structure, homotrimer. Self-assembles to form a layer. Interacts with A17 (via N-terminus); this interaction is necessary for D13 association with membranes.

Its subcellular location is the membrane. In terms of biological role, scaffold protein which forms a transitory spherical honeycomb lattice providing curvature and rigidity to the convex membrane of crescent and immature virions (IV). This association occurs concomitantly with viral membrane formation. Targeted by the drug rifampicin, which prevents the formation of this lattice, and hence virus morphogenesis. In the presence of rifampicin, irregularly shaped membranes that lack the honeycomb layer accumulate around areas of electron-dense viroplasm. This layer is lost from virions during maturation from IV to mature virion (MV), through the proteolysis of A17 N-terminus. The sequence is that of Scaffold protein from Vertebrata (FPV).